Here is a 410-residue protein sequence, read N- to C-terminus: Adenosine receptor A2a (410 aa).

Over 1–4 the chain is Extracellular; the sequence is MGSS. A helical membrane pass occupies residues 5 to 29; the sequence is VYITVELAIAVLAILGNVLVCWAVW. Residues 30 to 39 are Cytoplasmic-facing; that stretch reads INSNLQNVTN. Residues 40-63 form a helical membrane-spanning segment; that stretch reads FFVVSLAAADIAVGVLAIPFAITI. The Extracellular segment spans residues 64-74; the sequence is STGFCAACHGC. Intrachain disulfides connect cysteine 68/cysteine 154, cysteine 71/cysteine 143, and cysteine 74/cysteine 161. The chain crosses the membrane as a helical span at residues 75–97; that stretch reads LFFACFVLVLTQSSIFSLLAIAI. Residues 98–117 are Cytoplasmic-facing; the sequence is DRYIAIRIPLRYNGLVTGVR. Residues 118 to 140 form a helical membrane-spanning segment; the sequence is AKGIIAICWVLSFAIGLTPMLGW. Over 141-168 the chain is Extracellular; sequence NNCSQKDGNSTKTCGEGRVTCLFEDVVP. Asparagine 142 and asparagine 149 each carry an N-linked (GlcNAc...) asparagine glycan. Glutamate 164 is an adenosine binding site. A helical transmembrane segment spans residues 169–193; it reads MNYMVYYNFFAFVLLPLLLMLAIYL. Residues 194 to 229 lie on the Cytoplasmic side of the membrane; that stretch reads RIFLAARRQLKQMESQPLPGERTRSTLQKEVHAAKS. The chain crosses the membrane as a helical span at residues 230 to 253; the sequence is LAIIVGLFALCWLPLHIINCFTFF. Asparagine 248 is a binding site for adenosine. Cysteine 254 and cysteine 257 are joined by a disulfide. Topologically, residues 254–261 are extracellular; the sequence is CSTCRHAP. A helical transmembrane segment spans residues 262–285; the sequence is PWLMYLAIILSHSNSVVNPFIYAY. Adenosine-binding residues include serine 272 and histidine 273. The Cytoplasmic portion of the chain corresponds to 286 to 410; sequence RIREFRQTFR…SSWSSEFAPS (125 aa). The interaction with GAS2L2 stretch occupies residues 322–410; that stretch reads HSTEGEQVSL…SSWSSEFAPS (89 aa). The tract at residues 344-410 is disordered; the sequence is GSATHSGRRP…SSWSSEFAPS (67 aa). A compositionally biased stretch (basic and acidic residues) spans 371–388; it reads RDVELPTQERQEGQEHPG. The span at 401 to 410 shows a compositional bias: polar residues; the sequence is SSWSSEFAPS.

Belongs to the G-protein coupled receptor 1 family. As to quaternary structure, interacts (via cytoplasmic C-terminal domain) with USP4; the interaction is direct. May interact with DRD4. Interacts with NECAB2. Interacts (via cytoplasmic C-terminal domain) with GAS2L2; interaction enhances receptor-mediated adenylyl cyclase activity. Post-translationally, ubiquitinated. Deubiquitinated by USP4; leading to stabilization and expression at the cell surface. As to expression, expressed in striatal neurons (at protein level).

It is found in the cell membrane. In terms of biological role, receptor for adenosine. The activity of this receptor is mediated by G proteins which activate adenylyl cyclase. The sequence is that of Adenosine receptor A2a (Adora2a) from Rattus norvegicus (Rat).